Reading from the N-terminus, the 207-residue chain is Probable isochorismatase (207 aa).

This sequence belongs to the isochorismatase family.

It catalyses the reaction isochorismate + H2O = (2S,3S)-2,3-dihydroxy-2,3-dihydrobenzoate + pyruvate. Its pathway is antibiotic biosynthesis; phenazine biosynthesis. In terms of biological role, involved in the biosynthesis of the antibiotic phenazine, a nitrogen-containing heterocyclic molecule having important roles in virulence, competition and biological control. This isochorismatase may remove pyruvate from chorismate during the formation of the phenazine ring structure and/or stabilize the phenazine biosynthetic complex. The chain is Probable isochorismatase (phzA) from Pseudomonas chlororaphis (Pseudomonas aureofaciens).